Consider the following 315-residue polypeptide: Methionyl-tRNA formyltransferase (315 aa).

113–116 contributes to the (6S)-5,6,7,8-tetrahydrofolate binding site; that stretch reads SLLP.

The protein belongs to the Fmt family.

The catalysed reaction is L-methionyl-tRNA(fMet) + (6R)-10-formyltetrahydrofolate = N-formyl-L-methionyl-tRNA(fMet) + (6S)-5,6,7,8-tetrahydrofolate + H(+). In terms of biological role, attaches a formyl group to the free amino group of methionyl-tRNA(fMet). The formyl group appears to play a dual role in the initiator identity of N-formylmethionyl-tRNA by promoting its recognition by IF2 and preventing the misappropriation of this tRNA by the elongation apparatus. This Salmonella dublin (strain CT_02021853) protein is Methionyl-tRNA formyltransferase.